Reading from the N-terminus, the 273-residue chain is NAD kinase (273 aa).

Asp53 acts as the Proton acceptor in catalysis. NAD(+) is bound by residues Asp53 to Gly54, Arg58, Asn128 to Glu129, Asp157, Thr168 to Ser173, and Ala192.

Belongs to the NAD kinase family. A divalent metal cation is required as a cofactor.

Its subcellular location is the cytoplasm. The enzyme catalyses NAD(+) + ATP = ADP + NADP(+) + H(+). In terms of biological role, involved in the regulation of the intracellular balance of NAD and NADP, and is a key enzyme in the biosynthesis of NADP. Catalyzes specifically the phosphorylation on 2'-hydroxyl of the adenosine moiety of NAD to yield NADP. The sequence is that of NAD kinase from Finegoldia magna (strain ATCC 29328 / DSM 20472 / WAL 2508) (Peptostreptococcus magnus).